Reading from the N-terminus, the 445-residue chain is UNC93-like protein MFSD11 (445 aa).

Residues 8 to 28 (LLNIVILGVGFMFMFTAFQTS) form a helical membrane-spanning segment. A glycan (N-linked (GlcNAc...) asparagine) is linked at N40. 4 helical membrane passes run 52-72 (LAII…VIAV), 74-94 (GCQM…AMFI), 98-118 (TWSF…LWTA), and 138-158 (IFWA…YLAW). A glycan (N-linked (GlcNAc...) asparagine) is linked at N163. 7 helical membrane-spanning segments follow: residues 170–190 (RTVF…FFLI), 239–259 (MLLL…YSGV), 277–297 (LIGL…GLFG), 309–329 (PVVI…YLYM), 343–363 (LSAF…LLGL), 385–405 (APAF…AFFY), and 415–435 (LLIL…VEWG).

It belongs to the unc-93 family.

Its subcellular location is the membrane. The protein is UNC93-like protein MFSD11 (mfsd11) of Xenopus laevis (African clawed frog).